The chain runs to 168 residues: Cofilin-1-B (168 aa).

N-acetylalanine is present on alanine 2. Positions 4–153 (GVMVSDDVVK…NDPCNLADKL (150 aa)) constitute an ADF-H domain. Residues 30–34 (KKRKK) carry the Nuclear localization signal motif.

It belongs to the actin-binding proteins ADF family. Post-translationally, inactive when phosphorylated. Phosphorylation levels vary during development. Oocytes contain only the phosphorylated form, and 80-95% of cfl1 protein is phosphorylated in unfertilized eggs. Rapid dephosphorylation occurs within 30 minutes after fertilization. Phosphorylation levels increase again between the morula and blastula stages (5-8 hpf) and then decrease again as gastrulation approaches. Dephosphorylated by pdxp. As to expression, expressed diffusely in both animal and vegetal hemispheres of the oocyte. During cleavage, expression accumulates around the cleavage furrow, along the vegetal membrane, and later in the midbody. Strongly expressed in the animal hemisphere during blastula stages, with most cells showing expression by gastrulation. By stage 17, expression is highest in cells of the developing neuroectoderm, and at stage 24 the notochord, neural tube, neural crest, somites and some cells of the archenteron show high expression. By stage 35, expression has declined in the notochord, but remains in the neural tube, epidermis and a layer of cells in the archenteron. Also highly expressed in the retina and neuronal cell bodies at the base of the cement gland but not the cement gland itself. At stage 38, expression is widespread, being highest in the nervous system and retina. In the adult, expression is high in the brain, heart, oocyte, stomach, and low in skeletal muscle.

The protein localises to the nucleus matrix. It localises to the cytoplasm. Its subcellular location is the cytoskeleton. The protein resides in the cell cortex. It is found in the membrane. Its function is as follows. May play a role in the regulation of cell morphology and cytoskeletal organization. Binds to F-actin and exhibits pH-sensitive F-actin depolymerizing activity. Required for formation of the cleavage furrow during cytokinesis. This Xenopus laevis (African clawed frog) protein is Cofilin-1-B (cfl1-b).